The sequence spans 859 residues: Alanine--tRNA ligase (859 aa).

Residues histidine 562, histidine 566, cysteine 664, and histidine 668 each contribute to the Zn(2+) site.

This sequence belongs to the class-II aminoacyl-tRNA synthetase family. It depends on Zn(2+) as a cofactor.

The protein resides in the cytoplasm. The catalysed reaction is tRNA(Ala) + L-alanine + ATP = L-alanyl-tRNA(Ala) + AMP + diphosphate. In terms of biological role, catalyzes the attachment of alanine to tRNA(Ala) in a two-step reaction: alanine is first activated by ATP to form Ala-AMP and then transferred to the acceptor end of tRNA(Ala). Also edits incorrectly charged Ser-tRNA(Ala) and Gly-tRNA(Ala) via its editing domain. This Aliivibrio fischeri (strain ATCC 700601 / ES114) (Vibrio fischeri) protein is Alanine--tRNA ligase.